Here is an 877-residue protein sequence, read N- to C-terminus: Phosphoenolpyruvate carboxylase (877 aa).

Active-site residues include H138 and K543.

It belongs to the PEPCase type 1 family. It depends on Mg(2+) as a cofactor.

The enzyme catalyses oxaloacetate + phosphate = phosphoenolpyruvate + hydrogencarbonate. Forms oxaloacetate, a four-carbon dicarboxylic acid source for the tricarboxylic acid cycle. The protein is Phosphoenolpyruvate carboxylase of Aeromonas hydrophila subsp. hydrophila (strain ATCC 7966 / DSM 30187 / BCRC 13018 / CCUG 14551 / JCM 1027 / KCTC 2358 / NCIMB 9240 / NCTC 8049).